Reading from the N-terminus, the 173-residue chain is Alpha-crystallin A chain (173 aa).

An N-acetylmethionine modification is found at M1. The sHSP domain maps to L52 to S162. Positions 100, 102, 107, and 154 each coordinate Zn(2+). Positions P144–S173 are disordered. Positions S153–P167 are enriched in basic and acidic residues. O-linked (GlcNAc) serine glycosylation is present at S162.

This sequence belongs to the small heat shock protein (HSP20) family. In terms of assembly, heteropolymer composed of three CRYAA and one CRYAB subunits. Inter-subunit bridging via zinc ions enhances stability, which is crucial as there is no protein turn over in the lens. Can also form homodimers and homotetramers (dimers of dimers) which serve as the building blocks of homooligomers. Within homooligomers, the zinc-binding motif is created from residues of 3 different molecules. His-100 and Glu-102 from one molecule are ligands of the zinc ion, and His-107 and His-154 residues from additional molecules complete the site with tetrahedral coordination geometry.

It localises to the cytoplasm. The protein resides in the nucleus. Its function is as follows. Contributes to the transparency and refractive index of the lens. May act as a chaperone, preventing aggregation of various proteins under a wide range of stress conditions. The chain is Alpha-crystallin A chain (CRYAA) from Tupinambis teguixin (Golden tegu).